The chain runs to 420 residues: MTKWKRANPNGTRDYLFEECTLIEEVEQKLRRTFLERGYEEIRTPTIEFYDVFAFQNRPIDEEKMYKFFDEKGRIIVLRPDMTIPLARVIGTQRGDIPLKVTYSGNVFRANESLTGKYNEIVQSGIEIIGIENVRAEIECVISVIQALQKLKVQSFTIEIGQVQLYKCIVKKLPINDEEEKLLRTYIESKNYAALSHFIEEKKLNRCDETVRLLEKLPRLFGSLDVVEEAEKLASSNEMKMAIARVKEIYETIEQLGYGSYISIDLGMVQHLDYYTGVIFKGYIYEIGEEIVSGGRYDELIGNFGEMMPAVGLAVQVNQIVKALQEQQEPYKRKRIDIMIHYELNRLAEAERLRNLLQKDGKNAQLSLFSNLNDTFQFANKNKIMTVVEAKSESLVEYVWREKWIIQKEGEASCVTFKLR.

It belongs to the class-II aminoacyl-tRNA synthetase family. HisZ subfamily. As to quaternary structure, heteromultimer composed of HisG and HisZ subunits.

It is found in the cytoplasm. The protein operates within amino-acid biosynthesis; L-histidine biosynthesis; L-histidine from 5-phospho-alpha-D-ribose 1-diphosphate: step 1/9. Functionally, required for the first step of histidine biosynthesis. May allow the feedback regulation of ATP phosphoribosyltransferase activity by histidine. The protein is ATP phosphoribosyltransferase regulatory subunit of Bacillus mycoides (strain KBAB4) (Bacillus weihenstephanensis).